The sequence spans 144 residues: Arginine decarboxylase proenzyme (144 aa).

Ser-80 functions as the Schiff-base intermediate with substrate; via pyruvic acid in the catalytic mechanism. Position 80 is a pyruvic acid (Ser); by autocatalysis (Ser-80). His-85 acts as the Proton acceptor; for processing activity in catalysis. Catalysis depends on Cys-100, which acts as the Proton donor; for catalytic activity.

Belongs to the prokaryotic AdoMetDC family. Type 1 subfamily. In terms of assembly, heterooctamer of four alpha and four beta chains arranged as a tetramer of alpha/beta heterodimers. The cofactor is pyruvate. In terms of processing, is synthesized initially as an inactive proenzyme. Formation of the active enzyme involves a self-maturation process in which the active site pyruvoyl group is generated from an internal serine residue via an autocatalytic post-translational modification. Two non-identical subunits are generated from the proenzyme in this reaction, and the pyruvate is formed at the N-terminus of the alpha chain, which is derived from the carboxyl end of the proenzyme. The post-translation cleavage follows an unusual pathway, termed non-hydrolytic serinolysis, in which the side chain hydroxyl group of the serine supplies its oxygen atom to form the C-terminus of the beta chain, while the remainder of the serine residue undergoes an oxidative deamination to produce ammonia and the pyruvoyl group blocking the N-terminus of the alpha chain.

It carries out the reaction L-arginine + H(+) = agmatine + CO2. It participates in amine and polyamine biosynthesis; agmatine biosynthesis; agmatine from L-arginine: step 1/1. Its function is as follows. Specifically catalyzes the decarboxylation of L-arginine to agmatine. Has no S-adenosylmethionine decarboxylase (AdoMetDC) activity. This chain is Arginine decarboxylase proenzyme, found in Ignicoccus hospitalis (strain KIN4/I / DSM 18386 / JCM 14125).